A 227-amino-acid polypeptide reads, in one-letter code: Transmembrane emp24 domain-containing protein 1 (227 aa).

Residues 1-24 (MMAAGAAVALALWLLLPAVGVGEA) form the signal peptide. Residues 25–194 (GPPPIQDGEF…LQEDNLERVN (170 aa)) are Extracellular-facing. Residues 43 to 125 (KQCFYQSAPA…EKLVFFELIF (83 aa)) form the GOLD domain. The stretch at 145–170 (EMLDVKMEDIKESIETMRTRLERSIQ) forms a coiled coil. Residues 195–215 (FWSAANVAVLLLVAVLQVCTL) form a helical membrane-spanning segment. Topologically, residues 216–227 (KRFFHDKRPVPT) are cytoplasmic. A COPII vesicle coat-binding motif is present at residues 218 to 219 (FF). Positions 218–227 (FFHDKRPVPT) match the COPI vesicle coat-binding motif.

Belongs to the EMP24/GP25L family. As to quaternary structure, homodimer in endoplasmic reticulum, endoplasmic reticulum-Golgi intermediate compartment and cis-Golgi network. Interacts with IL1RL1. Interacts with RNF26; this interaction is important to modulate innate immune signaling through the cGAS-STING pathway. In terms of tissue distribution, widely expressed.

Its subcellular location is the cell membrane. The protein resides in the endoplasmic reticulum membrane. It localises to the golgi apparatus. The protein localises to the cis-Golgi network membrane. It is found in the endoplasmic reticulum-Golgi intermediate compartment membrane. In terms of biological role, potential role in vesicular protein trafficking, mainly in the early secretory pathway. May act as a cargo receptor at the lumenal side for incorporation of secretory cargo molecules into transport vesicles and may be involved in vesicle coat formation at the cytoplasmic side. Plays a positive role in IL-33-mediated IL-8 and IL-6 production by interacting with interleukin-33 receptor IL1RL1. Plays also a role in the modulation of innate immune signaling through the cGAS-STING pathway by interacting with RNF26. This chain is Transmembrane emp24 domain-containing protein 1 (Tmed1), found in Mus musculus (Mouse).